Reading from the N-terminus, the 291-residue chain is N-acetylmannosamine kinase (291 aa).

ATP is bound by residues 5–12 (AIDIGGTK) and 132–139 (GVGGGVVS). Zn(2+) is bound by residues His156, Cys166, Cys168, and Cys173.

The protein belongs to the ROK (NagC/XylR) family. NanK subfamily. In terms of assembly, homodimer.

The catalysed reaction is an N-acyl-D-mannosamine + ATP = an N-acyl-D-mannosamine 6-phosphate + ADP + H(+). It participates in amino-sugar metabolism; N-acetylneuraminate degradation; D-fructose 6-phosphate from N-acetylneuraminate: step 2/5. In terms of biological role, catalyzes the phosphorylation of N-acetylmannosamine (ManNAc) to ManNAc-6-P. The protein is N-acetylmannosamine kinase of Escherichia coli O139:H28 (strain E24377A / ETEC).